Consider the following 907-residue polypeptide: Lateral signaling target protein 2 homolog (907 aa).

Disordered regions lie at residues 339–395 (SSDN…DPAN), 463–604 (LTDS…SGDA), 662–688 (NSSP…PDPA), 716–756 (EVNA…SENG), and 770–834 (GSGG…EERR). Residues 351 to 361 (DISSFYTSNNR) show a composition bias toward polar residues. Acidic residues predominate over residues 367 to 393 (EPNEDDDVSESNDEDEDEGEEVDEDDP). Composition is skewed to polar residues over residues 463–475 (LTDS…NPSL) and 486–495 (PVTSSHPIAQ). The segment covering 501–516 (SEEEGEVDEYDEDDSE) has biased composition (acidic residues). A compositionally biased stretch (basic residues) spans 525 to 549 (HHTKHQRRHRHHHHHHRKHYSKHRS). The segment covering 550–565 (SAAGSAGTSGTTCSAA) has biased composition (low complexity). The segment covering 568 to 580 (QISSCDTSPSSGG) has biased composition (polar residues). A compositionally biased stretch (gly residues) spans 592–602 (GSSGNSSGGSG). Residues 742–751 (APRTMMTTAA) show a composition bias toward polar residues. The segment covering 777-793 (GSSRSSQERSVSLSETS) has biased composition (low complexity). The span at 816–826 (PKSVQSEQSGQ) shows a compositional bias: polar residues. An FYVE-type zinc finger spans residues 845-905 (DGDAPRCMAC…VCRECFVREV (61 aa)). Zn(2+) contacts are provided by Cys-851, Cys-854, Cys-867, Cys-870, Cys-875, Cys-878, Cys-897, and Cys-900.

It belongs to the lst-2 family.

Functionally, negative regulator of epidermal growth factor receptor (EGFR) signaling. In Culex quinquefasciatus (Southern house mosquito), this protein is Lateral signaling target protein 2 homolog.